A 205-amino-acid chain; its full sequence is Holliday junction branch migration complex subunit RuvA (205 aa).

The domain I stretch occupies residues 1–64 (MIGKLKGLID…EDQIKLFGFR (64 aa)). Residues 65-143 (SDVEREWFRL…AFADVDPGVI (79 aa)) are domain II. A flexible linker region spans residues 144–154 (RLSGAIEDSRA). The tract at residues 154 to 205 (APQPIADAISALINLGYGQPQAAAAIAAASRAAGDKAETAQLIRLGLKELAK) is domain III.

This sequence belongs to the RuvA family. Homotetramer. Forms an RuvA(8)-RuvB(12)-Holliday junction (HJ) complex. HJ DNA is sandwiched between 2 RuvA tetramers; dsDNA enters through RuvA and exits via RuvB. An RuvB hexamer assembles on each DNA strand where it exits the tetramer. Each RuvB hexamer is contacted by two RuvA subunits (via domain III) on 2 adjacent RuvB subunits; this complex drives branch migration. In the full resolvosome a probable DNA-RuvA(4)-RuvB(12)-RuvC(2) complex forms which resolves the HJ.

The protein resides in the cytoplasm. Its function is as follows. The RuvA-RuvB-RuvC complex processes Holliday junction (HJ) DNA during genetic recombination and DNA repair, while the RuvA-RuvB complex plays an important role in the rescue of blocked DNA replication forks via replication fork reversal (RFR). RuvA specifically binds to HJ cruciform DNA, conferring on it an open structure. The RuvB hexamer acts as an ATP-dependent pump, pulling dsDNA into and through the RuvAB complex. HJ branch migration allows RuvC to scan DNA until it finds its consensus sequence, where it cleaves and resolves the cruciform DNA. In Bradyrhizobium sp. (strain BTAi1 / ATCC BAA-1182), this protein is Holliday junction branch migration complex subunit RuvA.